A 471-amino-acid polypeptide reads, in one-letter code: Putative multidrug resistance protein MdtD (471 aa).

Residues 1-11 (MTDLPDSTRWQ) are Periplasmic-facing. The chain crosses the membrane as a helical span at residues 12–32 (LWIVAFGFFMQSLDTTIVNTA). At 33–48 (LPSMAQSLGESPLHMH) the chain is on the cytoplasmic side. A helical membrane pass occupies residues 49 to 69 (MVIVSYVLTVAVMLPASGWLA). Residues 70-76 (DKVGVRN) lie on the Periplasmic side of the membrane. A helical membrane pass occupies residues 77 to 97 (IFFTAIVLFTLGSLFCALSGT). At 98–101 (LNEL) the chain is on the cytoplasmic side. The helical transmembrane segment at 102–124 (LLARALQGVGGAMMVPVGRLTVM) threads the bilayer. The Periplasmic segment spans residues 125-137 (KIVPREQYMAAMT). Residues 138 to 158 (FVTLPGQVGPLLGPALGGLLV) form a helical membrane-spanning segment. The Cytoplasmic segment spans residues 159 to 164 (EYASWH). Residues 165–185 (WIFLINIPVGIIGAIATLMLM) form a helical membrane-spanning segment. The Periplasmic portion of the chain corresponds to 186-196 (PNYTMQTRRFD). The chain crosses the membrane as a helical span at residues 197 to 217 (LSGFLLLAVGMAVLTLALDGS). The Cytoplasmic portion of the chain corresponds to 218–224 (KGTGLSP). A helical transmembrane segment spans residues 225–245 (LAIAGLVAVGVVALVLYLLHA). Residues 246–262 (RNNNRALFSLKLFRTRT) lie on the Periplasmic side of the membrane. Residues 263–283 (FSLGLAGSFAGRIGSGMLPFM) form a helical membrane-spanning segment. Residues 284-285 (TP) are Cytoplasmic-facing. The chain crosses the membrane as a helical span at residues 286–306 (VFLQIGLGFSPFHAGLMMIPM). Residues 307–341 (VLGSMGMKRIVVQVVNRFGYRRVLVATTLGLSLVT) are Periplasmic-facing. The chain crosses the membrane as a helical span at residues 342-362 (LLFMTTALLGWYYVLPFVLFL). Residues 363–395 (QGMVNSTRFSSMNTLTLKDLPDNLASSGNSLLS) are Cytoplasmic-facing. The chain crosses the membrane as a helical span at residues 396 to 416 (MIMQLSMSIGVTIAGLLLGLF). Over 417–430 (GSQHISVDSGTTQT) the chain is Periplasmic. Residues 431–451 (VFMYTWLSMAFIIALPAFIFA) traverse the membrane as a helical segment. The Cytoplasmic segment spans residues 452-471 (RVPNDTHQNVAISRRKRSAQ).

It belongs to the major facilitator superfamily. TCR/Tet family.

It localises to the cell inner membrane. This chain is Putative multidrug resistance protein MdtD, found in Shigella flexneri.